The chain runs to 79 residues: Moronecidin (79 aa).

A signal peptide spans 1-22 (MKCATLSLVLSMVVLMAEPGDA). At G44 the chain carries Glycine amide. A disordered region spans residues 45-68 (GKAEQDQQDQQYQQDQQDQQAQQY). Positions 47-79 (AEQDQQDQQYQQDQQDQQAQQYQRFNRERAAFD) are excised as a propeptide. Positions 52 to 68 (QDQQYQQDQQDQQAQQY) are enriched in low complexity.

In terms of tissue distribution, expressed in gill, skin, intestine, spleen, anterior kidney, and blood cells.

Its subcellular location is the secreted. Antimicrobial peptide with broad-spectrum activity against Gram-positive and Gram-negative bacteria as well as against a variety of fungi. Rapidly inactivates both channel catfish herpesvirus (ED(50)=4 uM) and frog virus 3 (ED(50)=13 uM) over a wide temperature range. Seems to disrupt the membranes by adopting an alpha helical conformation. The sequence is that of Moronecidin from Morone chrysops (White bass).